A 467-amino-acid polypeptide reads, in one-letter code: Cysteine--tRNA ligase (467 aa).

Position 29 (Cys29) interacts with Zn(2+). A 'HIGH' region motif is present at residues 31–41; it reads ATVQGEPHIGH. Positions 207, 232, and 236 each coordinate Zn(2+). The short motif at 263 to 267 is the 'KMSKS' region element; that stretch reads KMSKS. ATP is bound at residue Lys266. The tract at residues 446–467 is disordered; sequence IDVTDTPNGPEWSLRTARGKAN.

Belongs to the class-I aminoacyl-tRNA synthetase family. Monomer. It depends on Zn(2+) as a cofactor.

The protein localises to the cytoplasm. It carries out the reaction tRNA(Cys) + L-cysteine + ATP = L-cysteinyl-tRNA(Cys) + AMP + diphosphate. The polypeptide is Cysteine--tRNA ligase (Nocardia farcinica (strain IFM 10152)).